The primary structure comprises 623 residues: Phosphoenolpyruvate carboxykinase [GTP] (623 aa).

Substrate contacts are provided by residues Arg86 and 220–222 (YGG). Mn(2+)-binding residues include Lys229 and His248. Residue Ser270 coordinates substrate. 271 to 276 (MCGKTS) contributes to the GTP binding site. Cys272 is a catalytic residue. Mn(2+) is bound at residue Asp289. 384–386 (NAR) serves as a coordination point for substrate. GTP contacts are provided by Arg386 and Arg418.

It belongs to the phosphoenolpyruvate carboxykinase [GTP] family. Homotetramer. Mn(2+) serves as cofactor.

It localises to the cytoplasm. It carries out the reaction oxaloacetate + GTP = phosphoenolpyruvate + GDP + CO2. Its pathway is carbohydrate biosynthesis; gluconeogenesis. Its function is as follows. Involved in the gluconeogenesis. Catalyzes the conversion of oxaloacetate (OAA) to phosphoenolpyruvate (PEP), the rate-limiting step in the metabolic pathway that produces glucose from lactate and other precursors derived from the citric acid cycle. In Thermococcus kodakarensis (strain ATCC BAA-918 / JCM 12380 / KOD1) (Pyrococcus kodakaraensis (strain KOD1)), this protein is Phosphoenolpyruvate carboxykinase [GTP] (pckG).